A 435-amino-acid chain; its full sequence is Gamma-glutamyl phosphate reductase (435 aa).

Belongs to the gamma-glutamyl phosphate reductase family.

It is found in the cytoplasm. It catalyses the reaction L-glutamate 5-semialdehyde + phosphate + NADP(+) = L-glutamyl 5-phosphate + NADPH + H(+). It functions in the pathway amino-acid biosynthesis; L-proline biosynthesis; L-glutamate 5-semialdehyde from L-glutamate: step 2/2. Its function is as follows. Catalyzes the NADPH-dependent reduction of L-glutamate 5-phosphate into L-glutamate 5-semialdehyde and phosphate. The product spontaneously undergoes cyclization to form 1-pyrroline-5-carboxylate. The chain is Gamma-glutamyl phosphate reductase from Aquifex aeolicus (strain VF5).